A 67-amino-acid polypeptide reads, in one-letter code: Large ribosomal subunit protein bL35 (67 aa).

It belongs to the bacterial ribosomal protein bL35 family.

This chain is Large ribosomal subunit protein bL35, found in Dehalococcoides mccartyi (strain ATCC BAA-2266 / KCTC 15142 / 195) (Dehalococcoides ethenogenes (strain 195)).